Reading from the N-terminus, the 630-residue chain is Phosphomethylpyrimidine synthase (630 aa).

Disordered stretches follow at residues 1 to 22 (MADI…TTGP) and 97 to 120 (AQRE…VPAF). Residues asparagine 224, methionine 253, tyrosine 282, histidine 318, 338–340 (SRG), 379–382 (DGLR), and glutamate 418 contribute to the substrate site. Histidine 422 is a binding site for Zn(2+). Residue tyrosine 445 participates in substrate binding. Zn(2+) is bound at residue histidine 486. Cysteine 566, cysteine 569, and cysteine 574 together coordinate [4Fe-4S] cluster.

The protein belongs to the ThiC family. As to quaternary structure, homodimer. Requires [4Fe-4S] cluster as cofactor.

The enzyme catalyses 5-amino-1-(5-phospho-beta-D-ribosyl)imidazole + S-adenosyl-L-methionine = 4-amino-2-methyl-5-(phosphooxymethyl)pyrimidine + CO + 5'-deoxyadenosine + formate + L-methionine + 3 H(+). It participates in cofactor biosynthesis; thiamine diphosphate biosynthesis. In terms of biological role, catalyzes the synthesis of the hydroxymethylpyrimidine phosphate (HMP-P) moiety of thiamine from aminoimidazole ribotide (AIR) in a radical S-adenosyl-L-methionine (SAM)-dependent reaction. The polypeptide is Phosphomethylpyrimidine synthase (Sphingopyxis alaskensis (strain DSM 13593 / LMG 18877 / RB2256) (Sphingomonas alaskensis)).